We begin with the raw amino-acid sequence, 211 residues long: MASSLIAKRFLSSSLLSRSLLRPAASASHRSFDTNAMRQYDNRADDHSTDIDRHSERSFPSTARRDDIFLRCVGSIFSDSEFEPGSEHDGPGHGQSVPLRVARDRSWRWSGRGWDARETEDALHLRVDMPGLAKEDVKISVEQNTLIIKGEGAKEGDEEESARRYTSRIDLPDKLYKIDQIRAEMKNGVLKVVVPKMKEEERKDVISVKVE.

The transit peptide at 1–31 directs the protein to the mitochondrion; sequence MASSLIAKRFLSSSLLSRSLLRPAASASHRS. Residues 105 to 211 enclose the sHSP domain; it reads RSWRWSGRGW…RKDVISVKVE (107 aa).

The protein belongs to the small heat shock protein (HSP20) family.

The protein localises to the mitochondrion. This is Heat shock 22 kDa protein, mitochondrial (HSP23.9) from Glycine max (Soybean).